We begin with the raw amino-acid sequence, 589 residues long: Transcription factor atf-6 homolog (589 aa).

A compositionally biased stretch (basic and acidic residues) spans 1–16 (MNFDNTVHESNFDDLL). The interval 1 to 82 (MNFDNTVHES…SSPPLSCANF (82 aa)) is disordered. Low complexity-rich tracts occupy residues 36–54 (GTDE…FSDQ) and 67–78 (GDSSSDSSPPLS). The 50-residue stretch at 250–299 (QNRKIRNRMYAQASRMRKKEADEHMKMNLQELLQENEILRTENAALKQRL) folds into the bZIP domain. The tract at residues 252–275 (RKIRNRMYAQASRMRKKEADEHMK) is basic motif. The stretch at 271 to 305 (DEHMKMNLQELLQENEILRTENAALKQRLAFFEHE) forms a coiled coil. Residues 281-295 (LLQENEILRTENAAL) form a leucine-zipper region. The chain crosses the membrane as a helical span at residues 324–344 (IIAAGSVLMMFGLFAVISPFN).

It belongs to the bZIP family. ATF subfamily.

The protein resides in the nucleus. It localises to the membrane. Transcription factor. Plays a role in the unfolded protein response (UPR), perhaps mainly during constitutive endoplasmic reticulum (ER) stress, by activating transcription of genes involved in the UPR. Plays a role in modulating lifespan, acting by positively regulating expression of calcium-binding chaperone crt-1, thereby influencing ER calcium homeostasis. By activating the UPR pathway, confers adaptive protection to subsequent exposure to hypoxia. Involved in protection against proteotoxicity, probably acting via the UPR. Probably acts in the UPR in parallel with the ire-1-xbp-1 and pek-1 pathways. May be regulated by endopeptidase S2P-mediated proteolytic cleavage. This chain is Transcription factor atf-6 homolog, found in Caenorhabditis elegans.